The chain runs to 403 residues: Imidazolonepropionase (403 aa).

Residues histidine 68 and histidine 70 each contribute to the Fe(3+) site. Histidine 68 and histidine 70 together coordinate Zn(2+). Arginine 77, tyrosine 140, and histidine 173 together coordinate 4-imidazolone-5-propanoate. Tyrosine 140 contributes to the N-formimidoyl-L-glutamate binding site. Histidine 238 serves as a coordination point for Fe(3+). Position 238 (histidine 238) interacts with Zn(2+). Residue glutamine 241 participates in 4-imidazolone-5-propanoate binding. Aspartate 313 is a binding site for Fe(3+). Aspartate 313 serves as a coordination point for Zn(2+). The N-formimidoyl-L-glutamate site is built by asparagine 315 and glycine 317. A 4-imidazolone-5-propanoate-binding site is contributed by serine 318.

It belongs to the metallo-dependent hydrolases superfamily. HutI family. It depends on Zn(2+) as a cofactor. Fe(3+) is required as a cofactor.

The protein resides in the cytoplasm. The enzyme catalyses 4-imidazolone-5-propanoate + H2O = N-formimidoyl-L-glutamate. It participates in amino-acid degradation; L-histidine degradation into L-glutamate; N-formimidoyl-L-glutamate from L-histidine: step 3/3. Its function is as follows. Catalyzes the hydrolytic cleavage of the carbon-nitrogen bond in imidazolone-5-propanoate to yield N-formimidoyl-L-glutamate. It is the third step in the universal histidine degradation pathway. The polypeptide is Imidazolonepropionase (Hahella chejuensis (strain KCTC 2396)).